We begin with the raw amino-acid sequence, 739 residues long: Sulfate transporter (739 aa).

The interval 1–44 (MSSENKEQHNLSPRDLPEEAYGFPPELPLGAQRGSSTDLRQFEP) is disordered. A Phosphoserine modification is found at S12. 2 consecutive transmembrane segments (helical) span residues 112–132 (MMSGLIVGILLVPQSIAYSLL) and 137–157 (PIYGLYTSFFASIIYFLFGTS). Residue N205 is glycosylated (N-linked (GlcNAc...) asparagine). 2 helical membrane passes run 227-247 (FMAGVYQVAMGFFQVGFVSVY) and 255-275 (GFVTGASFTILTSQAKYLLGL). An N-linked (GlcNAc...) asparagine glycan is attached at N357. Helical transmembrane passes span 378 to 398 (LIPNVAVDAIAISIIGFAITV), 420 to 440 (AIGFCNIIPSFFHCITTSAAL), 455 to 475 (LSAIVTSLVLLLVLLLIAPLF), and 524 to 544 (LLSTEIGLLVGVCFSMFCVIL). The region spanning 568 to 719 (TYKNLRSKSG…YSLSEAVAFA (152 aa)) is the STAS domain.

It belongs to the SLC26A/SulP transporter (TC 2.A.53) family. In terms of processing, N-glycosylated. Cartilage and intestine. Expressed in the kidney (at protein level).

The protein resides in the cell membrane. It is found in the apical cell membrane. It catalyses the reaction oxalate(in) + sulfate(out) = oxalate(out) + sulfate(in). The enzyme catalyses sulfate(out) + 2 chloride(in) = sulfate(in) + 2 chloride(out). It carries out the reaction oxalate(out) + 2 chloride(in) = oxalate(in) + 2 chloride(out). The catalysed reaction is bromide(in) + chloride(out) = bromide(out) + chloride(in). It catalyses the reaction nitrate(in) + chloride(out) = nitrate(out) + chloride(in). The enzyme catalyses iodide(in) + chloride(out) = iodide(out) + chloride(in). Sulfate transporter which mediates sulfate uptake into chondrocytes in order to maintain adequate sulfation of proteoglycans which is needed for cartilage development. Mediates electroneutral anion exchange of sulfate ions for oxalate ions, sulfate and oxalate ions for chloride and/or hydroxyl ions and chloride ions for bromide, iodide and nitrate ions. The coupling of sulfate transport to both hydroxyl and chloride ions likely serves to ensure transport at both acidic pH when most sulfate uptake is mediated by sulfate-hydroxide exchange and alkaline pH when most sulfate uptake is mediated by sulfate-chloride exchange. Essential for chondrocyte proliferation, differentiation and cell size expansion. The polypeptide is Sulfate transporter (Slc26a2) (Rattus norvegicus (Rat)).